The chain runs to 133 residues: Large ribosomal subunit protein bL12 (133 aa).

The protein belongs to the bacterial ribosomal protein bL12 family. As to quaternary structure, homodimer. Part of the ribosomal stalk of the 50S ribosomal subunit. Forms a multimeric L10(L12)X complex, where L10 forms an elongated spine to which 2 to 4 L12 dimers bind in a sequential fashion. Binds GTP-bound translation factors.

Forms part of the ribosomal stalk which helps the ribosome interact with GTP-bound translation factors. Is thus essential for accurate translation. The sequence is that of Large ribosomal subunit protein bL12 from Ehrlichia chaffeensis (strain ATCC CRL-10679 / Arkansas).